Consider the following 155-residue polypeptide: Endoribonuclease YbeY (155 aa).

Zn(2+)-binding residues include His114, His118, and His124.

This sequence belongs to the endoribonuclease YbeY family. The cofactor is Zn(2+).

The protein localises to the cytoplasm. Single strand-specific metallo-endoribonuclease involved in late-stage 70S ribosome quality control and in maturation of the 3' terminus of the 16S rRNA. The sequence is that of Endoribonuclease YbeY from Shigella flexneri serotype 5b (strain 8401).